A 399-amino-acid polypeptide reads, in one-letter code: Dual specificity mitogen-activated protein kinase kinase 4 (399 aa).

Residues 1-40 are disordered; the sequence is MAAPSPSGGGGSGGGSGSGTPGPVGSPAPGHPAVSSMQGK. An N-acetylalanine modification is found at alanine 2. Residues 7–22 are compositionally biased toward gly residues; sequence SGGGGSGGGSGSGTPG. The d domain stretch occupies residues 37–52; it reads MQGKRKALKLNFANPP. Arginine 58 is modified (asymmetric dimethylarginine; alternate). The residue at position 58 (arginine 58) is an Omega-N-methylarginine; alternate. Residue serine 90 is modified to Phosphoserine. The region spanning 102 to 367 is the Protein kinase domain; sequence LKDLGEIGRG…YKELLKHPFI (266 aa). Residues 108–116 and lysine 131 each bind ATP; that span reads IGRGAYGSV. Aspartate 229 (proton acceptor) is an active-site residue. Phosphoserine; by MAP3K is present on serine 257. Threonine 261 carries the phosphothreonine; by MAP3K modification. Residues 364–387 form a DVD domain region; it reads HPFILMYEERAVEVACYVCKILDQ.

The protein belongs to the protein kinase superfamily. STE Ser/Thr protein kinase family. MAP kinase kinase subfamily. As to quaternary structure, interacts with SPAG9. Interacts (via its D domain) with its substrates MAPK8/JNK1, MAPK9/JNK2, MAPK10/JNK3, MAPK11 and MAPK14. Interacts (via its DVD domain) with MAP3Ks activators like MAP3K1/MEKK1 and MAP3K11/MLK3. Interacts with ARRB1, ARRB2 and MAPK8IP3/JIP3. In terms of processing, activated by phosphorylation on Ser-257 and Thr-261 by MAP kinase kinase kinases (MAP3Ks). In terms of tissue distribution, abundant expression is seen in the skeletal muscle. It is also widely expressed in other tissues.

The protein resides in the cytoplasm. The protein localises to the nucleus. The enzyme catalyses L-seryl-[protein] + ATP = O-phospho-L-seryl-[protein] + ADP + H(+). It carries out the reaction L-threonyl-[protein] + ATP = O-phospho-L-threonyl-[protein] + ADP + H(+). It catalyses the reaction L-tyrosyl-[protein] + ATP = O-phospho-L-tyrosyl-[protein] + ADP + H(+). Activated in response to a variety of cellular stresses, including UV and gamma-irradiation, heat shock, hyperosmolarity, T-cell receptor stimulation, peroxide and inflammatory cytokines. Also activated by developmental cues. MAP2K4/MKK4 is activated by the majority of MKKKs, such as MAP3K5/ASK1, MAP3K1/MEKK1, MAP3K7/TAK1, MAP3K10/MLK2, MAP3K11/MLK3, MAP3K12/DLK and MAP3K13/LZK. Functionally, dual specificity protein kinase which acts as an essential component of the MAP kinase signal transduction pathway. Essential component of the stress-activated protein kinase/c-Jun N-terminal kinase (SAP/JNK) signaling pathway. With MAP2K7/MKK7, is the one of the only known kinase to directly activate the stress-activated protein kinase/c-Jun N-terminal kinases MAPK8/JNK1, MAPK9/JNK2 and MAPK10/JNK3. MAP2K4/MKK4 and MAP2K7/MKK7 both activate the JNKs by phosphorylation, but they differ in their preference for the phosphorylation site in the Thr-Pro-Tyr motif. MAP2K4 shows preference for phosphorylation of the Tyr residue and MAP2K7/MKK7 for the Thr residue. The phosphorylation of the Thr residue by MAP2K7/MKK7 seems to be the prerequisite for JNK activation at least in response to pro-inflammatory cytokines, while other stimuli activate both MAP2K4/MKK4 and MAP2K7/MKK7 which synergistically phosphorylate JNKs. MAP2K4 is required for maintaining peripheral lymphoid homeostasis. The MKK/JNK signaling pathway is also involved in mitochondrial death signaling pathway, including the release cytochrome c, leading to apoptosis. Whereas MAP2K7/MKK7 exclusively activates JNKs, MAP2K4/MKK4 additionally activates the p38 MAPKs MAPK11, MAPK12, MAPK13 and MAPK14. The chain is Dual specificity mitogen-activated protein kinase kinase 4 (MAP2K4) from Homo sapiens (Human).